The sequence spans 284 residues: Probable endonuclease 4 (284 aa).

Residues histidine 69, histidine 109, glutamate 145, aspartate 179, histidine 182, histidine 216, aspartate 229, histidine 231, and glutamate 261 each contribute to the Zn(2+) site.

The protein belongs to the AP endonuclease 2 family. Zn(2+) serves as cofactor.

It carries out the reaction Endonucleolytic cleavage to 5'-phosphooligonucleotide end-products.. Functionally, endonuclease IV plays a role in DNA repair. It cleaves phosphodiester bonds at apurinic or apyrimidinic (AP) sites, generating a 3'-hydroxyl group and a 5'-terminal sugar phosphate. This is Probable endonuclease 4 from Chlorobium phaeobacteroides (strain BS1).